The chain runs to 504 residues: Activin receptor type-1-like (504 aa).

The first 20 residues, 1 to 20 (MTLGIFRRVFLMLSVALGLT), serve as a signal peptide directing secretion. Residues 21–121 (KGDLVKPSRG…EEPEVDAHLP (101 aa)) are Extracellular-facing. N-linked (GlcNAc...) asparagine glycosylation occurs at Asn34. 3 disulfides stabilise this stretch: Cys35–Cys52, Cys37–Cys42, and Cys47–Cys70. The tract at residues 74–77 (NQEL) is mediates specificity for BMP ligand. 2 cysteine pairs are disulfide-bonded: Cys78–Cys90 and Cys91–Cys96. Asn99 carries N-linked (GlcNAc...) asparagine glycosylation. A helical membrane pass occupies residues 122-142 (LILGPVLALLVLVALGTLGLW). The Cytoplasmic segment spans residues 143–504 (RVRRRQEKQR…QNPEKPKVIH (362 aa)). Phosphoserine is present on residues Ser156, Ser161, and Ser162. The GS domain occupies 173 to 202 (SMLGDFLVSDCTTGSGSGLPFLVQRTVARQ). The 302-residue stretch at 203 to 504 (VALVECVGKG…QNPEKPKVIH (302 aa)) folds into the Protein kinase domain. ATP-binding positions include 209 to 217 (VGKGRYGEV) and Lys230. The active-site Proton acceptor is the Asp331.

Belongs to the protein kinase superfamily. TKL Ser/Thr protein kinase family. TGFB receptor subfamily. As to quaternary structure, interacts with TSC22D1/TSC-22. Mg(2+) is required as a cofactor. Mn(2+) serves as cofactor. In terms of tissue distribution, urogenital ridge, testis, ovary, brain and lung. In lung, found exclusively in pulmonary vessels of all sizes. Also expressed in aorta, vena cava and certain blood vessels of kidney, spleen, heart and intestine. For most blood vessels, a higher level of expression is found in endothelium than in adjacent smooth muscle.

The protein localises to the cell membrane. The enzyme catalyses L-threonyl-[receptor-protein] + ATP = O-phospho-L-threonyl-[receptor-protein] + ADP + H(+). It catalyses the reaction L-seryl-[receptor-protein] + ATP = O-phospho-L-seryl-[receptor-protein] + ADP + H(+). Type I receptor for TGF-beta family ligands BMP9/GDF2 and BMP10 and important regulator of normal blood vessel development. On ligand binding, forms a receptor complex consisting of two type II and two type I transmembrane serine/threonine kinases. Type II receptors phosphorylate and activate type I receptors which autophosphorylate, then bind and activate SMAD transcriptional regulators. May bind activin as well. The protein is Activin receptor type-1-like (Acvrl1) of Rattus norvegicus (Rat).